Reading from the N-terminus, the 393-residue chain is NAD(P)H-quinone oxidoreductase subunit H, chloroplastic (393 aa).

It belongs to the complex I 49 kDa subunit family. In terms of assembly, NDH is composed of at least 16 different subunits, 5 of which are encoded in the nucleus.

Its subcellular location is the plastid. It is found in the chloroplast thylakoid membrane. It carries out the reaction a plastoquinone + NADH + (n+1) H(+)(in) = a plastoquinol + NAD(+) + n H(+)(out). It catalyses the reaction a plastoquinone + NADPH + (n+1) H(+)(in) = a plastoquinol + NADP(+) + n H(+)(out). In terms of biological role, NDH shuttles electrons from NAD(P)H:plastoquinone, via FMN and iron-sulfur (Fe-S) centers, to quinones in the photosynthetic chain and possibly in a chloroplast respiratory chain. The immediate electron acceptor for the enzyme in this species is believed to be plastoquinone. Couples the redox reaction to proton translocation, and thus conserves the redox energy in a proton gradient. This is NAD(P)H-quinone oxidoreductase subunit H, chloroplastic from Carica papaya (Papaya).